Reading from the N-terminus, the 567-residue chain is Geranylgeranyl transferase type-2 subunit alpha (567 aa).

PFTA repeat units follow at residues leucine 44–valine 78, leucine 88–glutamate 122, asparagine 124–valine 158, proline 159–proline 193, valine 207–proline 241, and valine 363–proline 397. Position 98 is a phosphoserine (serine 98). 5 LRR repeats span residues glutamate 442–leucine 463, leucine 464–arginine 486, cysteine 487–proline 508, arginine 509–threonine 530, and arginine 534–leucine 555.

The protein belongs to the protein prenyltransferase subunit alpha family. Heterotrimer composed of RABGGTA, RABGGTB and CHM; within this trimer, RABGGTA and RABGGTB form the catalytic component B, while CHM (component A) mediates peptide substrate binding. The Rab GGTase dimer (RGGT) interacts with CHM (component A) prior to Rab protein binding; the association is stabilized by geranylgeranyl pyrophosphate (GGpp). The CHM:RGGT:Rab complex is destabilized by GGpp. Interacts with non-phosphorylated form of RAB8A; phosphorylation of RAB8A at 'Thr-72' disrupts this interaction.

It carries out the reaction geranylgeranyl diphosphate + L-cysteinyl-[protein] = S-geranylgeranyl-L-cysteinyl-[protein] + diphosphate. Its activity is regulated as follows. The enzymatic reaction requires the aid of a Rab escort protein (also called component A), such as CHM. Its function is as follows. Catalyzes the transfer of a geranylgeranyl moiety from geranylgeranyl diphosphate to both cysteines of Rab proteins with the C-terminal sequence -XXCC, -XCXC and -CCXX, such as RAB1A, RAB3A, RAB5A and RAB7A. The polypeptide is Geranylgeranyl transferase type-2 subunit alpha (RABGGTA) (Bos taurus (Bovine)).